A 740-amino-acid chain; its full sequence is Ion-translocating oxidoreductase complex subunit C (740 aa).

4Fe-4S ferredoxin-type domains lie at 369–397 and 407–436; these read GEPQEEQSCIRCSACADACPADLLPQQLY and KATTHNIADCIECGACAWVCPSNIPLVQYF. [4Fe-4S] cluster contacts are provided by C377, C380, C383, C387, C416, C419, C422, and C426. Disordered regions lie at residues 571-590 and 602-716; these read LEQQQANAEPEQQVDPRKAA and KLEQ…DPRK. Composition is skewed to low complexity over residues 573 to 583 and 637 to 647; these read QQQANAEPEQQ.

Belongs to the 4Fe4S bacterial-type ferredoxin family. RnfC subfamily. The complex is composed of six subunits: RsxA, RsxB, RsxC, RsxD, RsxE and RsxG. The cofactor is [4Fe-4S] cluster.

The protein resides in the cell inner membrane. Its function is as follows. Part of a membrane-bound complex that couples electron transfer with translocation of ions across the membrane. Required to maintain the reduced state of SoxR. Probably transfers electron from NAD(P)H to SoxR. The protein is Ion-translocating oxidoreductase complex subunit C of Escherichia coli (strain K12).